The sequence spans 926 residues: Protein Niban 1 (926 aa).

Gly2 carries the N-myristoyl glycine lipid modification. A phosphoserine mark is found at Ser578, Ser581, Ser595, Ser601, and Ser640. Disordered regions lie at residues 604 to 699 (LPGA…VPGS) and 719 to 889 (VEND…EQVN). The segment covering 661–672 (VENTAGPLSSHL) has biased composition (polar residues). Phosphoserine is present on Ser699. The segment covering 733–745 (NIKEEESKIHPEA) has biased composition (basic and acidic residues). Phosphoserine is present on Ser755. The segment covering 756-767 (CEEREVREKEAQ) has biased composition (basic and acidic residues). Positions 784 to 797 (GRGSTSQSTSGGLT) are enriched in low complexity. A compositionally biased stretch (polar residues) spans 840–854 (VTVTPQEDATLSSNP). The residue at position 923 (Ser923) is a Phosphoserine.

This sequence belongs to the Niban family.

The protein resides in the cytoplasm. It is found in the membrane. Functionally, regulates phosphorylation of a number of proteins involved in translation regulation including EIF2A, EIF4EBP1 and RPS6KB1. May be involved in the endoplasmic reticulum stress response. The sequence is that of Protein Niban 1 from Mus musculus (Mouse).